The primary structure comprises 284 residues: Anaerobic dimethyl sulfoxide reductase chain YnfH (284 aa).

Over 1–9 (MGNGWHEWP) the chain is Periplasmic. Residues 10–30 (LVIFTVLGQCVVGALIVSGIG) traverse the membrane as a helical segment. The Cytoplasmic portion of the chain corresponds to 31-45 (WFAAKNDADRQRIVR). Residues 46 to 66 (GMFFLWLLMGVGFIASVMHLG) form a helical membrane-spanning segment. Over 67–86 (SPLRAFNSLNRIGASGLSNE) the chain is Periplasmic. The helical transmembrane segment at 87 to 107 (IAAGSIFFAVGGLWWLVAVIG) threads the bilayer. Residues 108–115 (KMPQALGK) are Cytoplasmic-facing. The helical transmembrane segment at 116 to 136 (LWLLFSMALGVIFVWMMTCVY) threads the bilayer. Residues 137-148 (QIDTVPTWHNGY) are Periplasmic-facing. A helical membrane pass occupies residues 149-169 (TTLAFFLTVLLSGPILAAAIL). At 170-180 (RAARVTFNTTP) the chain is on the cytoplasmic side. The chain crosses the membrane as a helical span at residues 181 to 201 (FAIISVLALIACAGVIVLQGL). The Periplasmic portion of the chain corresponds to 202–222 (SLASIHSSVQQASALVPDYAS). The chain crosses the membrane as a helical span at residues 223–243 (LQVWRVVLLCAGLGCWLCPLI). Over 244–250 (RRREPHV) the chain is Cytoplasmic. Residues 251–271 (AGLILGLILILGGEMIGRVLF) traverse the membrane as a helical segment. Residues 272 to 284 (YGLHMTVGMAIAG) lie on the Periplasmic side of the membrane.

The protein belongs to the DmsC family. As to quaternary structure, the complex consists of three subunits: YnfF, the reductase; YnfG, an electron transfer protein, and YnfH, a membrane anchor protein.

It localises to the cell inner membrane. Functionally, terminal reductase during anaerobic growth on various sulfoxide and N-oxide compounds. The C subunit anchors the other two subunits to the membrane and stabilize the catalytic subunits. This Escherichia coli (strain K12) protein is Anaerobic dimethyl sulfoxide reductase chain YnfH (ynfH).